Consider the following 505-residue polypeptide: Flagellin (505 aa).

It belongs to the bacterial flagellin family.

It is found in the secreted. The protein localises to the bacterial flagellum. Its function is as follows. Flagellin is the subunit protein which polymerizes to form the filaments of bacterial flagella. The sequence is that of Flagellin (fliC) from Salmonella dublin.